The chain runs to 414 residues: Ciliary microtubule-associated protein 2 (414 aa).

In Mus musculus (Mouse), this protein is Ciliary microtubule-associated protein 2 (Cimap2).